The primary structure comprises 259 residues: Thiazole synthase (259 aa).

The active-site Schiff-base intermediate with DXP is lysine 99. 1-deoxy-D-xylulose 5-phosphate contacts are provided by residues glycine 161, 187-188 (AG), and 209-219 (NSAIACAQNPI).

Belongs to the ThiG family. In terms of assembly, homotetramer. Forms heterodimers with either ThiH or ThiS.

It localises to the cytoplasm. It carries out the reaction [ThiS sulfur-carrier protein]-C-terminal-Gly-aminoethanethioate + 2-iminoacetate + 1-deoxy-D-xylulose 5-phosphate = [ThiS sulfur-carrier protein]-C-terminal Gly-Gly + 2-[(2R,5Z)-2-carboxy-4-methylthiazol-5(2H)-ylidene]ethyl phosphate + 2 H2O + H(+). It functions in the pathway cofactor biosynthesis; thiamine diphosphate biosynthesis. Functionally, catalyzes the rearrangement of 1-deoxy-D-xylulose 5-phosphate (DXP) to produce the thiazole phosphate moiety of thiamine. Sulfur is provided by the thiocarboxylate moiety of the carrier protein ThiS. In vitro, sulfur can be provided by H(2)S. This is Thiazole synthase from Aliarcobacter butzleri (strain RM4018) (Arcobacter butzleri).